The sequence spans 143 residues: Ribonuclease H (143 aa).

Residues 1–140 form the RNase H type-1 domain; sequence MKVEIYTDGA…VDALANLGIE (140 aa). Residues Asp-8, Glu-46, Asp-68, and Asp-132 each contribute to the Mg(2+) site.

Belongs to the RNase H family. Monomer. Mg(2+) is required as a cofactor.

Its subcellular location is the cytoplasm. It catalyses the reaction Endonucleolytic cleavage to 5'-phosphomonoester.. Functionally, endonuclease that specifically degrades the RNA of RNA-DNA hybrids. This is Ribonuclease H from Legionella pneumophila (strain Lens).